A 279-amino-acid polypeptide reads, in one-letter code: Thymidylate synthase (279 aa).

Position 133-134 (Arg133–Arg134) interacts with dUMP. Cys154 (nucleophile) is an active-site residue. Residues Arg178–Asp181, Asn189, and His219–Tyr221 contribute to the dUMP site. Residue Asp181 participates in (6R)-5,10-methylene-5,6,7,8-tetrahydrofolate binding. A (6R)-5,10-methylene-5,6,7,8-tetrahydrofolate-binding site is contributed by Ala278.

This sequence belongs to the thymidylate synthase family. Bacterial-type ThyA subfamily. Homodimer.

It localises to the cytoplasm. It catalyses the reaction dUMP + (6R)-5,10-methylene-5,6,7,8-tetrahydrofolate = 7,8-dihydrofolate + dTMP. It functions in the pathway pyrimidine metabolism; dTTP biosynthesis. Its function is as follows. Catalyzes the reductive methylation of 2'-deoxyuridine-5'-monophosphate (dUMP) to 2'-deoxythymidine-5'-monophosphate (dTMP) while utilizing 5,10-methylenetetrahydrofolate (mTHF) as the methyl donor and reductant in the reaction, yielding dihydrofolate (DHF) as a by-product. This enzymatic reaction provides an intracellular de novo source of dTMP, an essential precursor for DNA biosynthesis. The sequence is that of Thymidylate synthase from Streptococcus gordonii (strain Challis / ATCC 35105 / BCRC 15272 / CH1 / DL1 / V288).